The primary structure comprises 299 residues: UTP--glucose-1-phosphate uridylyltransferase 1 (299 aa).

Belongs to the UDPGP type 2 family.

It carries out the reaction alpha-D-glucose 1-phosphate + UTP + H(+) = UDP-alpha-D-glucose + diphosphate. The protein operates within carbohydrate metabolism; nucleotide-sugar metabolism. This is UTP--glucose-1-phosphate uridylyltransferase 1 (hasC1) from Streptococcus pyogenes serotype M6 (strain ATCC BAA-946 / MGAS10394).